The chain runs to 468 residues: Proline--tRNA ligase (468 aa).

Belongs to the class-II aminoacyl-tRNA synthetase family. ProS type 3 subfamily. In terms of assembly, homodimer.

Its subcellular location is the cytoplasm. The catalysed reaction is tRNA(Pro) + L-proline + ATP = L-prolyl-tRNA(Pro) + AMP + diphosphate. Its function is as follows. Catalyzes the attachment of proline to tRNA(Pro) in a two-step reaction: proline is first activated by ATP to form Pro-AMP and then transferred to the acceptor end of tRNA(Pro). This is Proline--tRNA ligase from Frankia alni (strain DSM 45986 / CECT 9034 / ACN14a).